The primary structure comprises 680 residues: E3 ubiquitin-protein ligase brl2 (680 aa).

The stretch at 44–72 (RSIQFDELESKIEGLQNLAEEKLKVLATL) forms a coiled coil. The tract at residues 206–233 (PQSTKVKEEATTSSKGKDEEKKVSTVEQ) is disordered. The segment covering 210 to 229 (KVKEEATTSSKGKDEEKKVS) has biased composition (basic and acidic residues). Coiled-coil stretches lie at residues 261 to 288 (LDSN…TNLK), 353 to 399 (MQND…ETMV), and 485 to 609 (DSLH…LKDT). An RING-type zinc finger spans residues 627–667 (CSVCNFERWKDRIISLCGHGFCYQCIQKRIETRQRRCPICG).

It belongs to the BRE1 family. Component of the histone H2B ubiquitin ligase complex (HULC) composed of at least brl1, brl2, rhp6 and shf1.

Its subcellular location is the nucleus. The enzyme catalyses S-ubiquitinyl-[E2 ubiquitin-conjugating enzyme]-L-cysteine + [acceptor protein]-L-lysine = [E2 ubiquitin-conjugating enzyme]-L-cysteine + N(6)-ubiquitinyl-[acceptor protein]-L-lysine.. The protein operates within protein modification; protein ubiquitination. Functionally, E3 ubiquitin-protein ligase which belongs to the histone H2B ubiquitin ligase complex (HULC) which mediates monoubiquitination of histone H2B to form H2BK123ub1. H2BK123ub1 gives a specific tag for epigenetic transcriptional activation and is also a prerequisite for H3K4me and H3K79me formation. This Schizosaccharomyces pombe (strain 972 / ATCC 24843) (Fission yeast) protein is E3 ubiquitin-protein ligase brl2 (brl2).